Reading from the N-terminus, the 272-residue chain is Shikimate dehydrogenase (NADP(+)) (272 aa).

Shikimate-binding positions include 14 to 16 (SKS) and Thr-61. The active-site Proton acceptor is Lys-65. Glu-77 serves as a coordination point for NADP(+). Shikimate is bound by residues Asn-86 and Asp-102. NADP(+) is bound by residues 126–130 (GAGGA), 149–154 (NRTVSR), and Met-213. Tyr-215 serves as a coordination point for shikimate. Gly-237 serves as a coordination point for NADP(+).

The protein belongs to the shikimate dehydrogenase family. Homodimer.

The enzyme catalyses shikimate + NADP(+) = 3-dehydroshikimate + NADPH + H(+). It participates in metabolic intermediate biosynthesis; chorismate biosynthesis; chorismate from D-erythrose 4-phosphate and phosphoenolpyruvate: step 4/7. Functionally, involved in the biosynthesis of the chorismate, which leads to the biosynthesis of aromatic amino acids. Catalyzes the reversible NADPH linked reduction of 3-dehydroshikimate (DHSA) to yield shikimate (SA). This Escherichia coli O6:K15:H31 (strain 536 / UPEC) protein is Shikimate dehydrogenase (NADP(+)).